Reading from the N-terminus, the 500-residue chain is Probable cytosol aminopeptidase (500 aa).

Positions 264 and 269 each coordinate Mn(2+). Residue Lys276 is part of the active site. Residues Asp287, Asp346, and Glu348 each contribute to the Mn(2+) site. Residue Arg350 is part of the active site.

The protein belongs to the peptidase M17 family. The cofactor is Mn(2+).

It localises to the cytoplasm. It carries out the reaction Release of an N-terminal amino acid, Xaa-|-Yaa-, in which Xaa is preferably Leu, but may be other amino acids including Pro although not Arg or Lys, and Yaa may be Pro. Amino acid amides and methyl esters are also readily hydrolyzed, but rates on arylamides are exceedingly low.. The enzyme catalyses Release of an N-terminal amino acid, preferentially leucine, but not glutamic or aspartic acids.. In terms of biological role, presumably involved in the processing and regular turnover of intracellular proteins. Catalyzes the removal of unsubstituted N-terminal amino acids from various peptides. In Rhodopseudomonas palustris (strain BisB5), this protein is Probable cytosol aminopeptidase.